The chain runs to 87 residues: Potassium channel toxin Tdi-beta-KTx (87 aa).

The signal sequence occupies residues 1–19 (MERKLALLLLLGMITLASS). Residues 20-27 (GLREKHVQ) constitute a propeptide that is removed on maturation. A BetaSPN-type CS-alpha/beta domain is found at 53-87 (QFGCPAYEGYCMNHCQDIERHDGSCHGFKCKCEKS). 3 disulfide bridges follow: cysteine 56-cysteine 77, cysteine 63-cysteine 82, and cysteine 67-cysteine 84.

As to expression, expressed by the venom gland.

The protein localises to the secreted. Inhibits voltage-gated potassium channel. The protein is Potassium channel toxin Tdi-beta-KTx of Tityus discrepans (Venezuelan scorpion).